Consider the following 235-residue polypeptide: Small ribosomal subunit protein uS3 (235 aa).

In terms of domain architecture, KH type-2 spans 39–107; the sequence is IRQYVFKALP…DVSLNIVEIR (69 aa).

Belongs to the universal ribosomal protein uS3 family. As to quaternary structure, part of the 30S ribosomal subunit. Forms a tight complex with proteins S10 and S14.

Its function is as follows. Binds the lower part of the 30S subunit head. Binds mRNA in the 70S ribosome, positioning it for translation. This Sphingopyxis alaskensis (strain DSM 13593 / LMG 18877 / RB2256) (Sphingomonas alaskensis) protein is Small ribosomal subunit protein uS3.